The primary structure comprises 141 residues: MPGLFAAKKLKDNRQNFRWKDTQYKRKTLGLNIKADPLEGSPQARGIVIEKVGIEAKQPNSAIRKCVRVQLIKNGKQITAFAPGDGAIGFIDEHDEVMIEGIGGPSGRSMGDIPGVRWKVTKVNNVALSEMVSGKIEKPVR.

It belongs to the universal ribosomal protein uS12 family. Part of the 30S ribosomal subunit.

Its function is as follows. With S4 and S5 plays an important role in translational accuracy. Located at the interface of the 30S and 50S subunits. The sequence is that of Small ribosomal subunit protein uS12 from Methanosphaera stadtmanae (strain ATCC 43021 / DSM 3091 / JCM 11832 / MCB-3).